Reading from the N-terminus, the 89-residue chain is uncharacterized protein (89 aa).

The 89-residue stretch at 1–89 folds into the HTH arsR-type domain; sequence MEKYEKAAEI…KEIIKLVDEL (89 aa).

This is an uncharacterized protein from Methanocaldococcus jannaschii (strain ATCC 43067 / DSM 2661 / JAL-1 / JCM 10045 / NBRC 100440) (Methanococcus jannaschii).